We begin with the raw amino-acid sequence, 188 residues long: Ubiquitin-like protein 4B (188 aa).

The Ubiquitin-like domain maps to 1–76 (MFLTVKLLLG…INVIMRPPED (76 aa)). Residues 146–188 (EEKEAPAVASELEQNNGGGGGGGGTGGEGGGKKEEEEGEEADQ) form a disordered region. A compositionally biased stretch (gly residues) spans 161–174 (NGGGGGGGGTGGEG).

As to expression, expressed specifically in post-meiotic male germ cells of the testis. Abundantly expressed in stage 14-16 spermatids.

It is found in the cytoplasm. The polypeptide is Ubiquitin-like protein 4B (Ubl4b) (Mus musculus (Mouse)).